The sequence spans 290 residues: Fructose-1,6-bisphosphatase class 1 (290 aa).

Mg(2+) contacts are provided by glutamate 78, aspartate 96, leucine 98, and aspartate 99. Substrate-binding positions include 99–102 (DGSS), tyrosine 201, and lysine 226. A Mg(2+)-binding site is contributed by glutamate 232.

This sequence belongs to the FBPase class 1 family. As to quaternary structure, homotetramer. Mg(2+) is required as a cofactor.

The protein localises to the cytoplasm. The catalysed reaction is beta-D-fructose 1,6-bisphosphate + H2O = beta-D-fructose 6-phosphate + phosphate. It functions in the pathway carbohydrate biosynthesis; gluconeogenesis. The protein is Fructose-1,6-bisphosphatase class 1 of Helicobacter pylori (strain J99 / ATCC 700824) (Campylobacter pylori J99).